A 151-amino-acid polypeptide reads, in one-letter code: uncharacterized protein (151 aa).

Residues 1–77 form a disordered region; that stretch reads MSLLGGMWKS…LGSNPISSSR (77 aa). Composition is skewed to low complexity over residues 19 to 54 and 63 to 76; these read PKPS…RSSN and SISG…ISSS.

This is an uncharacterized protein from Methanothermobacter marburgensis (strain ATCC BAA-927 / DSM 2133 / JCM 14651 / NBRC 100331 / OCM 82 / Marburg) (Methanobacterium thermoautotrophicum).